The sequence spans 1168 residues: Transcription-repair-coupling factor (1168 aa).

The Helicase ATP-binding domain occupies 633–794 (DMQKSRPMDR…MLGVRDLSVI (162 aa)). 646–653 (GDVGYGKT) serves as a coordination point for ATP. The DEEQ box signature appears at 747–750 (DEEQ). Positions 808–969 (VLEQNMSFIK…GFKIAMRDLN (162 aa)) constitute a Helicase C-terminal domain.

This sequence in the N-terminal section; belongs to the UvrB family. In the C-terminal section; belongs to the helicase family. RecG subfamily.

The protein resides in the cytoplasm. Functionally, couples transcription and DNA repair by recognizing RNA polymerase (RNAP) stalled at DNA lesions. Mediates ATP-dependent release of RNAP and its truncated transcript from the DNA, and recruitment of nucleotide excision repair machinery to the damaged site. This Staphylococcus aureus (strain MRSA252) protein is Transcription-repair-coupling factor.